We begin with the raw amino-acid sequence, 222 residues long: Cytidylate kinase (222 aa).

9–17 is an ATP binding site; the sequence is GPAGSGKTT.

The protein belongs to the cytidylate kinase family. Type 1 subfamily.

It localises to the cytoplasm. The enzyme catalyses CMP + ATP = CDP + ADP. It carries out the reaction dCMP + ATP = dCDP + ADP. The chain is Cytidylate kinase from Thermosipho africanus (strain TCF52B).